The primary structure comprises 40 residues: Photosystem II reaction center protein J (40 aa).

The chain crosses the membrane as a helical span at residues 8 to 28 (IPLWLIGTIAGILVIGLVGIF).

This sequence belongs to the PsbJ family. In terms of assembly, PSII is composed of 1 copy each of membrane proteins PsbA, PsbB, PsbC, PsbD, PsbE, PsbF, PsbH, PsbI, PsbJ, PsbK, PsbL, PsbM, PsbT, PsbX, PsbY, PsbZ, Psb30/Ycf12, at least 3 peripheral proteins of the oxygen-evolving complex and a large number of cofactors. It forms dimeric complexes.

The protein resides in the plastid. It is found in the chloroplast thylakoid membrane. One of the components of the core complex of photosystem II (PSII). PSII is a light-driven water:plastoquinone oxidoreductase that uses light energy to abstract electrons from H(2)O, generating O(2) and a proton gradient subsequently used for ATP formation. It consists of a core antenna complex that captures photons, and an electron transfer chain that converts photonic excitation into a charge separation. This is Photosystem II reaction center protein J from Anthoceros angustus (Hornwort).